A 500-amino-acid chain; its full sequence is Amino-acid acetyltransferase, mitochondrial (500 aa).

A mitochondrion-targeting transit peptide spans methionine 1–serine 19. Residues phenylalanine 336–proline 496 form the N-acetyltransferase domain.

It belongs to the acetyltransferase family.

Its subcellular location is the mitochondrion. It carries out the reaction L-glutamate + acetyl-CoA = N-acetyl-L-glutamate + CoA + H(+). It participates in amino-acid biosynthesis; L-arginine biosynthesis; N(2)-acetyl-L-ornithine from L-glutamate: step 1/4. N-acetylglutamate synthase involved in arginine biosynthesis. This Schizosaccharomyces pombe (strain 972 / ATCC 24843) (Fission yeast) protein is Amino-acid acetyltransferase, mitochondrial (arg6).